A 728-amino-acid polypeptide reads, in one-letter code: Polyribonucleotide nucleotidyltransferase (728 aa).

Mg(2+)-binding residues include Asp488 and Asp494. Residues 555–614 (PRMITMKIHPDKIREVIGKGGSTIQALTKETGTTIDIQEDGTITIASTSTDGMAEAKRRI) form the KH domain. Residues 624–692 (GKIYNGTVLK…EKGRLRLSLK (69 aa)) enclose the S1 motif domain. The disordered stretch occupies residues 702–728 (ISPVNAGEAAPAPAPAAAPATPSDQQQ). Residues 710–721 (AAPAPAPAAAPA) are compositionally biased toward low complexity.

Belongs to the polyribonucleotide nucleotidyltransferase family. The cofactor is Mg(2+).

Its subcellular location is the cytoplasm. The catalysed reaction is RNA(n+1) + phosphate = RNA(n) + a ribonucleoside 5'-diphosphate. Involved in mRNA degradation. Catalyzes the phosphorolysis of single-stranded polyribonucleotides processively in the 3'- to 5'-direction. This is Polyribonucleotide nucleotidyltransferase from Cupriavidus pinatubonensis (strain JMP 134 / LMG 1197) (Cupriavidus necator (strain JMP 134)).